A 460-amino-acid chain; its full sequence is Orexin receptor type 2 (460 aa).

Topologically, residues 1 to 54 are extracellular; sequence MSSTKLEDSLPRRNWSSASELNETQEPFLNPTDYDDEEFLRYLWREYLHPKEYE. N-linked (GlcNAc...) asparagine glycosylation is found at asparagine 14 and asparagine 22. Positions 33–49 are required for response to orexin-A; it reads DYDDEEFLRYLWREYLH. Residues 55 to 75 traverse the membrane as a helical segment; sequence WVLIAGYIIVFVVALIGNVLV. Over 76-88 the chain is Cytoplasmic; sequence CVAVWKNHHMRTV. A helical membrane pass occupies residues 89-110; the sequence is TNYFIVNLSLADVLVTITCLPA. Residues 111-127 are Extracellular-facing; the sequence is TLVVDITETWFFGQSLC. Residues cysteine 127 and cysteine 210 are joined by a disulfide bond. Residues 128–150 traverse the membrane as a helical segment; sequence KVIPYLQTVSVSVSVLTLSCIAL. The Cytoplasmic portion of the chain corresponds to 151-170; that stretch reads DRWYAICHPLMFKSTAKRAR. The helical transmembrane segment at 171–191 threads the bilayer; sequence NSIVVIWIVSCIIMIPQAIVM. The Extracellular segment spans residues 192–222; that stretch reads ERSSMLPGLANKTTLFTVCDERWGGEVYPKM. Asparagine 202 is a glycosylation site (N-linked (GlcNAc...) asparagine). Residues 223 to 243 traverse the membrane as a helical segment; sequence YHICFFLVTYMAPLCLMVLAY. At 244-304 the chain is on the cytoplasmic side; sequence LQIFRKLWCR…QIRARRKTAR (61 aa). A helical transmembrane segment spans residues 305–326; sequence MLMVVLLVFAICYLPISILNVL. At 327–342 the chain is on the extracellular side; it reads KRVFGMFTHTEDRETV. A helical transmembrane segment spans residues 343–366; that stretch reads YAWFTFSHWLVYANSAANPIIYNF. The Cytoplasmic segment spans residues 367 to 460; that stretch reads LSGKFREEFK…SSLLSTWLEV (94 aa).

It belongs to the G-protein coupled receptor 1 family. As to expression, expressed in the brain in the cerebral cortex, septal nuclei, hippocampus, medial thalamic groups, dorsal and median raphe nuclei, and many hypothalamic nuclei including the tuberomammillary nucleus, dorsomedial hypothalamus, paraventricular hypothalamic nucleus, and ventral premammillary nucleus. Not detected in the spleen, lung, liver, skeletal muscle, kidney and testis. Orexin receptor mRNA expression has also been reported in the adrenal gland, enteric nervous system, and pancreas.

The protein localises to the cell membrane. In terms of biological role, nonselective, high-affinity receptor for both orexin-A and orexin-B neuropeptides. Triggers an increase in cytoplasmic Ca(2+) levels in response to orexin-A binding. This chain is Orexin receptor type 2 (Hcrtr2), found in Rattus norvegicus (Rat).